The sequence spans 300 residues: Alpha-ketoglutarate-dependent dioxygenase alkB homolog 4 (300 aa).

A2 is modified (N-acetylalanine). The Fe2OG dioxygenase domain occupies 148-272 (PVEQCNLDYS…RVCATFRELS (125 aa)). H167, D169, and H252 together coordinate Fe cation. R263 serves as a coordination point for 2-oxoglutarate.

Belongs to the alkB family. As to quaternary structure, interacts with ZFHX3, MLLT3, MLLT1, HSF4, EP300, TES, EIF3C, MTMR6 and PSMA6. Requires Fe(2+) as cofactor.

The protein resides in the cytoplasm. The protein localises to the nucleus. It is found in the nucleolus. It localises to the midbody. The enzyme catalyses an N(6)-methyl-2'-deoxyadenosine in DNA + 2-oxoglutarate + O2 = a 2'-deoxyadenosine in DNA + formaldehyde + succinate + CO2. It carries out the reaction N(6)-methyl-L-lysyl-[protein] + 2-oxoglutarate + O2 = L-lysyl-[protein] + formaldehyde + succinate + CO2. Dioxygenase that mediates demethylation of actin monomethylated at 'Lys-84' (K84me1), thereby acting as a regulator of actomyosin-processes. Demethylation of actin K84me1 is required for maintaining actomyosin dynamics supporting normal cleavage furrow ingression during cytokinesis and cell migration. In addition to proteins, also demethylates DNA: specifically demethylates DNA methylated on the 6th position of adenine (N(6)-methyladenosine) DNA, thereby regulating Polycomb silencing. This is Alpha-ketoglutarate-dependent dioxygenase alkB homolog 4 from Mus musculus (Mouse).